The following is a 561-amino-acid chain: Putative transport protein YbjL (561 aa).

Helical transmembrane passes span 8–28 (LLNG…LCLG), 32–52 (LGSV…LLGQ), 66–86 (FMLF…SIFF), 94–114 (MLAL…GKLF), and 158–178 (NLSL…IVGA). 2 RCK C-terminal domains span residues 200–288 (RGLD…SFRN) and 292–373 (VFDR…RIGF). The next 5 membrane-spanning stretches (helical) occupy residues 383 to 403 (LLAF…TFQF), 406 to 426 (FSFG…LGFL), 447 to 467 (FGLM…ISNG), 475 to 495 (MLIA…LFGA), and 540 to 560 (AIAN…WPGL).

It belongs to the AAE transporter (TC 2.A.81) family. YbjL subfamily.

The protein resides in the cell membrane. The chain is Putative transport protein YbjL from Salmonella dublin (strain CT_02021853).